Consider the following 338-residue polypeptide: 1-aminocyclopropane-1-carboxylate deaminase (338 aa).

Position 51 is an N6-(pyridoxal phosphate)lysine (lysine 51). Serine 78 (nucleophile) is an active-site residue.

This sequence belongs to the ACC deaminase/D-cysteine desulfhydrase family. In terms of assembly, homotrimer. The cofactor is pyridoxal 5'-phosphate.

It carries out the reaction 1-aminocyclopropane-1-carboxylate + H2O = 2-oxobutanoate + NH4(+). Functionally, catalyzes a cyclopropane ring-opening reaction, the irreversible conversion of 1-aminocyclopropane-1-carboxylate (ACC) to ammonia and alpha-ketobutyrate. Allows growth on ACC as a nitrogen source. The protein is 1-aminocyclopropane-1-carboxylate deaminase of Burkholderia vietnamiensis (strain G4 / LMG 22486) (Burkholderia cepacia (strain R1808)).